A 357-amino-acid polypeptide reads, in one-letter code: Hemolysin VllY (357 aa).

2 VOC domains span residues 12-132 (GFEF…FVDR) and 162-313 (EIDH…IFTQ). Fe cation contacts are provided by His-165, His-243, and Glu-322.

This sequence belongs to the 4HPPD family. The cofactor is Fe cation.

The chain is Hemolysin VllY (vllY) from Vibrio vulnificus (strain CMCP6).